Consider the following 353-residue polypeptide: Phospho-N-acetylmuramoyl-pentapeptide-transferase (353 aa).

A run of 10 helical transmembrane segments spans residues 22-42 (FAFF…ITWA), 65-85 (TPTM…LFCI), 88-108 (DNIF…IGLI), 129-149 (LLAQ…SSEL), 161-181 (PLFD…ISSS), 192-212 (GLAT…LYLS), 228-248 (GLGE…GFLW), 256-276 (VFMG…LAVI), 281-301 (ILLL…ILQV), and 330-350 (KIIV…LASI).

It belongs to the glycosyltransferase 4 family. MraY subfamily. The cofactor is Mg(2+).

It is found in the cell inner membrane. It catalyses the reaction UDP-N-acetyl-alpha-D-muramoyl-L-alanyl-gamma-D-glutamyl-meso-2,6-diaminopimeloyl-D-alanyl-D-alanine + di-trans,octa-cis-undecaprenyl phosphate = di-trans,octa-cis-undecaprenyl diphospho-N-acetyl-alpha-D-muramoyl-L-alanyl-D-glutamyl-meso-2,6-diaminopimeloyl-D-alanyl-D-alanine + UMP. Its pathway is cell wall biogenesis; peptidoglycan biosynthesis. Its function is as follows. Catalyzes the initial step of the lipid cycle reactions in the biosynthesis of the cell wall peptidoglycan: transfers peptidoglycan precursor phospho-MurNAc-pentapeptide from UDP-MurNAc-pentapeptide onto the lipid carrier undecaprenyl phosphate, yielding undecaprenyl-pyrophosphoryl-MurNAc-pentapeptide, known as lipid I. In Campylobacter jejuni subsp. jejuni serotype O:2 (strain ATCC 700819 / NCTC 11168), this protein is Phospho-N-acetylmuramoyl-pentapeptide-transferase.